A 257-amino-acid chain; its full sequence is Nickel import system ATP-binding protein NikD (257 aa).

The 242-residue stretch at 4 to 245 (IDIQNLTIKN…HLHPYTERLI (242 aa)) folds into the ABC transporter domain. Residue 37–44 (GESGAGKS) participates in ATP binding.

Belongs to the ABC transporter superfamily. The complex is composed of two ATP-binding proteins (NikD and NikE), two transmembrane proteins (NikB and NikC) and a solute-binding protein (NikA).

The protein localises to the cell membrane. The enzyme catalyses Ni(2+)(out) + ATP + H2O = Ni(2+)(in) + ADP + phosphate + H(+). Its function is as follows. Part of the ABC transporter complex NikABCDE (Opp2) involved in nickel import. Probably responsible for energy coupling to the transport system. In Staphylococcus aureus (strain Mu50 / ATCC 700699), this protein is Nickel import system ATP-binding protein NikD.